A 361-amino-acid chain; its full sequence is Aromatic amino acid aminotransferase (361 aa).

K215 carries the N6-(pyridoxal phosphate)lysine modification.

Belongs to the class-II pyridoxal-phosphate-dependent aminotransferase family. In terms of assembly, homodimer. Pyridoxal 5'-phosphate is required as a cofactor.

It carries out the reaction an aromatic L-alpha-amino acid + 2-oxoglutarate = an aromatic oxo-acid + L-glutamate. Its function is as follows. Aminotransferase that catalyzes the conversion of aromatic amino acids and 2-oxoglutarate into corresponding aromatic oxo acids and L-glutamate. The sequence is that of Aromatic amino acid aminotransferase from Mycolicibacterium smegmatis (strain ATCC 700084 / mc(2)155) (Mycobacterium smegmatis).